A 156-amino-acid chain; its full sequence is Peroxisomal membrane associated protein 20 (156 aa).

Residues 2–156 (VAVGSTLPKV…SSADKVLSSL (155 aa)) form the Thioredoxin domain. Cys-43 acts as the Cysteine sulfenic acid (-SOH) intermediate in catalysis.

The protein belongs to the peroxiredoxin family. Prx5 subfamily. In terms of assembly, homodimer; disulfide-linked, upon oxidation.

Its subcellular location is the cytoplasm. The protein localises to the nucleus. Functionally, may act as a chaperone rather than a peroxidase. Has no thioredoxin-dependent peroxidase activity. Shows weak chaperone activity. This chain is Peroxisomal membrane associated protein 20, found in Schizosaccharomyces pombe (strain 972 / ATCC 24843) (Fission yeast).